The chain runs to 300 residues: GTPase Era (300 aa).

The Era-type G domain occupies 5 to 172; that stretch reads HSGFVAIIGR…LTALTDALPV (168 aa). Residues 13-20 are G1; sequence GRPNVGKS. Residue 13–20 participates in GTP binding; that stretch reads GRPNVGKS. The interval 39 to 43 is G2; the sequence is QTTRN. Residues 60–63 form a G3 region; that stretch reads DTPG. Residues 60-64 and 122-125 each bind GTP; these read DTPGI and NKID. The tract at residues 122 to 125 is G4; that stretch reads NKID. A G5 region spans residues 151-153; sequence ISA. Residues 203–280 enclose the KH type-2 domain; that stretch reads TRDEVPHAVA…NLKLWVRVQK (78 aa).

The protein belongs to the TRAFAC class TrmE-Era-EngA-EngB-Septin-like GTPase superfamily. Era GTPase family. In terms of assembly, monomer.

It is found in the cytoplasm. The protein localises to the cell membrane. An essential GTPase that binds both GDP and GTP, with rapid nucleotide exchange. Plays a role in 16S rRNA processing and 30S ribosomal subunit biogenesis and possibly also in cell cycle regulation and energy metabolism. The chain is GTPase Era from Lacticaseibacillus paracasei (strain ATCC 334 / BCRC 17002 / CCUG 31169 / CIP 107868 / KCTC 3260 / NRRL B-441) (Lactobacillus paracasei).